Consider the following 236-residue polypeptide: L-aspartate dehydrogenase (236 aa).

NAD(+) contacts are provided by residues alanine 10–isoleucine 11, aspartate 31, alanine 58–serine 59, tyrosine 66, leucine 80–serine 81, alanine 111, and asparagine 162. Histidine 189 is an active-site residue. Asparagine 212–threonine 215 serves as a coordination point for NAD(+).

It belongs to the L-aspartate dehydrogenase family. As to quaternary structure, homodimer.

The enzyme catalyses L-aspartate + NADP(+) + H2O = oxaloacetate + NH4(+) + NADPH + H(+). The catalysed reaction is L-aspartate + NAD(+) + H2O = oxaloacetate + NH4(+) + NADH + H(+). Its pathway is cofactor biosynthesis; NAD(+) biosynthesis; iminoaspartate from L-aspartate (dehydrogenase route): step 1/1. In terms of biological role, specifically catalyzes the NAD or NADP-dependent dehydrogenation of L-aspartate to iminoaspartate. The chain is L-aspartate dehydrogenase from Archaeoglobus fulgidus (strain ATCC 49558 / DSM 4304 / JCM 9628 / NBRC 100126 / VC-16).